We begin with the raw amino-acid sequence, 68 residues long: Large ribosomal subunit protein uL30 (68 aa).

This sequence belongs to the universal ribosomal protein uL30 family. In terms of assembly, part of the 50S ribosomal subunit.

The chain is Large ribosomal subunit protein uL30 from Bartonella henselae (strain ATCC 49882 / DSM 28221 / CCUG 30454 / Houston 1) (Rochalimaea henselae).